The sequence spans 258 residues: Ribosomal RNA large subunit methyltransferase E (258 aa).

S-adenosyl-L-methionine-binding residues include Gly-58, Trp-60, Asp-78, Asp-96, and Asp-120. The active-site Proton acceptor is Lys-160.

This sequence belongs to the class I-like SAM-binding methyltransferase superfamily. RNA methyltransferase RlmE family.

Its subcellular location is the cytoplasm. The catalysed reaction is uridine(2552) in 23S rRNA + S-adenosyl-L-methionine = 2'-O-methyluridine(2552) in 23S rRNA + S-adenosyl-L-homocysteine + H(+). Its function is as follows. Specifically methylates the uridine in position 2552 of 23S rRNA at the 2'-O position of the ribose in the fully assembled 50S ribosomal subunit. The protein is Ribosomal RNA large subunit methyltransferase E of Methanococcus maripaludis (strain DSM 14266 / JCM 13030 / NBRC 101832 / S2 / LL).